A 126-amino-acid chain; its full sequence is Small ribosomal subunit protein eS6 (126 aa).

It belongs to the eukaryotic ribosomal protein eS6 family.

The polypeptide is Small ribosomal subunit protein eS6 (Methanothermobacter thermautotrophicus (strain ATCC 29096 / DSM 1053 / JCM 10044 / NBRC 100330 / Delta H) (Methanobacterium thermoautotrophicum)).